The chain runs to 174 residues: Dual-action ribosomal maturation protein DarP (174 aa).

The protein belongs to the DarP family.

It localises to the cytoplasm. Its function is as follows. Member of a network of 50S ribosomal subunit biogenesis factors which assembles along the 30S-50S interface, preventing incorrect 23S rRNA structures from forming. Promotes peptidyl transferase center (PTC) maturation. The sequence is that of Dual-action ribosomal maturation protein DarP from Pseudomonas aeruginosa (strain LESB58).